Consider the following 427-residue polypeptide: tRNA(Ile)-lysidine synthase (427 aa).

18 to 23 (SGGLDS) lines the ATP pocket.

Belongs to the tRNA(Ile)-lysidine synthase family.

The protein resides in the cytoplasm. The enzyme catalyses cytidine(34) in tRNA(Ile2) + L-lysine + ATP = lysidine(34) in tRNA(Ile2) + AMP + diphosphate + H(+). Functionally, ligates lysine onto the cytidine present at position 34 of the AUA codon-specific tRNA(Ile) that contains the anticodon CAU, in an ATP-dependent manner. Cytidine is converted to lysidine, thus changing the amino acid specificity of the tRNA from methionine to isoleucine. This is tRNA(Ile)-lysidine synthase from Pseudomonas putida (strain ATCC 47054 / DSM 6125 / CFBP 8728 / NCIMB 11950 / KT2440).